The primary structure comprises 170 residues: 4-hydroxyphenylacetate 3-monooxygenase reductase component (170 aa).

Belongs to the non-flavoprotein flavin reductase family. HpaC subfamily. Monomer. HPA 3-hydroxylase consists of a reductase component HpaC and an oxygenase component HpaB. Some form of interactions between the reductase and the oxygenase facilitate the transfer of FADH(-) to the oxygenase in P.aeruginosa, although interactions are not required in other species.

The enzyme catalyses FADH2 + NAD(+) = FAD + NADH + 2 H(+). The protein operates within aromatic compound metabolism; 4-hydroxyphenylacetate degradation; pyruvate and succinate semialdehyde from 4-hydroxyphenylacetate: step 1/7. Its activity is regulated as follows. The rate of FAD reduction is independent of the presence of HPA, demonstrating that, in contrast to HPAH from A.baumannii, the activity of the HPAH reductase is not allosterically regulated by the substrate. In terms of biological role, reductase component of the 4-hydroxyphenylacetate (HPA) 3-hydroxylase. Catalyzes the reduction of FAD by NADH. The reduced flavin is then transferred to the oxygenase component HpaB. Is also able to reduce FMN and riboflavin, but preferentially binds FAD. Has no activity with NADPH as the reductant. This Pseudomonas aeruginosa (strain ATCC 15692 / DSM 22644 / CIP 104116 / JCM 14847 / LMG 12228 / 1C / PRS 101 / PAO1) protein is 4-hydroxyphenylacetate 3-monooxygenase reductase component.